Here is a 299-residue protein sequence, read N- to C-terminus: Mimecan (299 aa).

Residues 1 to 19 (MKTLQSTLLLFLFVPLIKP) form the signal peptide. An N-linked (GlcNAc...) (keratan sulfate) asparagine glycan is attached at Asn89. LRR repeat units lie at residues 113 to 132 (DAVPPLPKESAYLYARFNKI), 133 to 156 (KKLTAKDFADIPNLRRLDFTGNLI), 157 to 180 (EDIEDGTFSKLSLLEELTLAENQL), 181 to 200 (LKLPVLPPKLTLFNAKYNKI), 201 to 226 (KSRGIKANTFKKLHNLSFLYLDHNAL), 227 to 247 (ESVPLNLPESLRVIHLQFNNI), and 248 to 278 (TSITDDTFCKANDTSYIRDRIEEIRLEGNPV). An N-linked (GlcNAc...) (keratan sulfate) asparagine glycan is attached at Asn215. N-linked (GlcNAc...) asparagine glycosylation occurs at Asn246. A disulfide bridge connects residues Cys256 and Cys289. A glycan (N-linked (GlcNAc...) (keratan sulfate) asparagine) is linked at Asn259.

Belongs to the small leucine-rich proteoglycan (SLRP) family. SLRP class III subfamily. Post-translationally, contains keratan sulfate. Keratan sulfate attachment is observed in the cornea but the protein also exists in other tissues without keratan sulfate. In terms of processing, the 12 kDa OIF in bone and the 25 kDa KSPG25 protein in cornea are probably proteolytic fragments. As to expression, bone and cornea.

It is found in the secreted. It localises to the extracellular space. The protein localises to the extracellular matrix. Functionally, induces bone formation in conjunction with TGF-beta-1 or TGF-beta-2. The sequence is that of Mimecan (OGN) from Bos taurus (Bovine).